The primary structure comprises 941 residues: Isoleucine--tRNA ligase (941 aa).

Residues 58–68 carry the 'HIGH' region motif; that stretch reads PYANGNIHLGH. Glu-564 serves as a coordination point for L-isoleucyl-5'-AMP. The 'KMSKS' region signature appears at 605–609; it reads KMSKS. ATP is bound at residue Lys-608. 4 residues coordinate Zn(2+): Cys-904, Cys-907, Cys-924, and Cys-927.

The protein belongs to the class-I aminoacyl-tRNA synthetase family. IleS type 1 subfamily. In terms of assembly, monomer. Zn(2+) is required as a cofactor.

Its subcellular location is the cytoplasm. The catalysed reaction is tRNA(Ile) + L-isoleucine + ATP = L-isoleucyl-tRNA(Ile) + AMP + diphosphate. Catalyzes the attachment of isoleucine to tRNA(Ile). As IleRS can inadvertently accommodate and process structurally similar amino acids such as valine, to avoid such errors it has two additional distinct tRNA(Ile)-dependent editing activities. One activity is designated as 'pretransfer' editing and involves the hydrolysis of activated Val-AMP. The other activity is designated 'posttransfer' editing and involves deacylation of mischarged Val-tRNA(Ile). The chain is Isoleucine--tRNA ligase from Hahella chejuensis (strain KCTC 2396).